Consider the following 400-residue polypeptide: Cysteine desulfurase (400 aa).

Pyridoxal 5'-phosphate contacts are provided by residues 71–72 (GT), N150, Q178, and 198–200 (SGH). K201 carries the post-translational modification N6-(pyridoxal phosphate)lysine. Residue T236 participates in pyridoxal 5'-phosphate binding. The active-site Cysteine persulfide intermediate is the C324. C324 is a binding site for [2Fe-2S] cluster.

This sequence belongs to the class-V pyridoxal-phosphate-dependent aminotransferase family. NifS/IscS subfamily. In terms of assembly, homodimer. The cofactor is pyridoxal 5'-phosphate.

It carries out the reaction (sulfur carrier)-H + L-cysteine = (sulfur carrier)-SH + L-alanine. Functionally, catalyzes the removal of elemental sulfur atoms from cysteine to produce alanine. Seems to participate in the biosynthesis of the nitrogenase metalloclusters by providing the inorganic sulfur required for the Fe-S core formation. The sequence is that of Cysteine desulfurase from Nostoc sp. (strain PCC 7120 / SAG 25.82 / UTEX 2576).